Here is a 487-residue protein sequence, read N- to C-terminus: Fibroblast growth factor receptor-like 1 (487 aa).

The signal sequence occupies residues 1-18 (MGLQLALLLAGIVALSDS). The Extracellular portion of the chain corresponds to 19–371 (ARGPPRIADK…PSSVSSLPWP (353 aa)). Residues 23-109 (PRIADKVIHR…GSTNVNYTLI (87 aa)) enclose the Ig-like C2-type 1 domain. Cys-45 and Cys-93 are disulfide-bonded. Residue Asn-105 is glycosylated (N-linked (GlcNAc...) asparagine). Polar residues predominate over residues 115–125 (SSGKNSQTPEG). The tract at residues 115–147 (SSGKNSQTPEGSNGEYEDHSGKQWAQPRFTQPA) is disordered. Ig-like C2-type domains are found at residues 141–231 (PRFT…YKVE) and 240–348 (PILT…AFLT). Cys-166 and Cys-215 are disulfide-bonded. Residues Asn-225, Asn-249, and Asn-287 are each glycosylated (N-linked (GlcNAc...) asparagine). A disulfide bridge connects residues Cys-262 and Cys-332. Residues 372-392 (VIIGIPAGAVFIFGTILLWLC) traverse the membrane as a helical segment. Residues 393–487 (QTKKKPCSPP…HQHQHIQYQC (95 aa)) lie on the Cytoplasmic side of the membrane.

As to quaternary structure, interacts with heparin and FGF2. In terms of tissue distribution, expressed in cartilaginous structures.

It localises to the cell membrane. Functionally, has a negative effect on cell proliferation. This chain is Fibroblast growth factor receptor-like 1 (FGFRL1), found in Gallus gallus (Chicken).